The primary structure comprises 231 residues: RING finger protein 141 (231 aa).

The N-myristoyl glycine moiety is linked to residue glycine 2. An RING-type zinc finger spans residues 156–193 (CCICMDGRADLILPCAHSFCQKCIDKWSDRHRNCPICR).

It localises to the membrane. Its function is as follows. May be involved in spermatogenesis. The polypeptide is RING finger protein 141 (RNF141) (Canis lupus familiaris (Dog)).